We begin with the raw amino-acid sequence, 279 residues long: PHO85 cyclin-1 (279 aa).

In terms of domain architecture, Cyclin N-terminal spans 19 to 152; the sequence is DIIKFLTDTT…LLQLLNWDLR (134 aa). Residues 29–36 form a required for degradation by DMA1 region; that stretch reads LRVVPSSN. Residue threonine 39 is modified to Phosphothreonine; by PHO85. Phosphoserine; by PHO85 is present on serine 43. Residues lysine 82 and lysine 121 each participate in a glycyl lysine isopeptide (Lys-Gly) (interchain with G-Cter in ubiquitin) cross-link.

This sequence belongs to the cyclin family. PCL1,2 subfamily. Forms a cyclin-CDK complex with PHO85. Interacts with HMS1, NCP1 and NPA3. Interacts with DMA1. In terms of processing, phosphorylated by PHO85; necessary for interaction with DMA1 and subsequent degradation. Ubiquitinated by E3 ubiquitin ligase DMA1 in response to nutrient condition; this targets PCL1 for destruction.

The protein resides in the cytoplasm. It is found in the nucleus. Its function is as follows. G1/S-specific cyclin partner of the cyclin-dependent kinase (CDK) PHO85. Essential for the control of the cell cycle at the G1/S (start) transition. The PCL1-PHO85 cyclin-CDK holoenzyme is involved in phosphorylation of the CDK inhibitor (CKI) SIC1, which is required for its ubiquitination and degradation, releasing repression of b-type cyclins and promoting exit from mitosis. Together with cyclin PCL2, positively controls degradation of sphingoid long chain base kinase LCB4. PCL1-PHO85 phosphorylates LCB4, which is required for its ubiquitination and degradation. PCL1-PHO85 also phosphorylates HMS1, NCP1 and NPA3, which may all have a role in mitotic exit. The chain is PHO85 cyclin-1 from Saccharomyces cerevisiae (strain ATCC 204508 / S288c) (Baker's yeast).